Reading from the N-terminus, the 306-residue chain is Bacitracin transport ATP-binding protein BcrA (306 aa).

The region spanning 5-233 (IKTTDLTKMY…NRKYLEFQLS (229 aa)) is the ABC transporter domain. 37 to 44 (GRNGAGKT) serves as a coordination point for ATP.

Belongs to the ABC transporter superfamily.

In terms of biological role, part of the binding-protein-dependent transport system for bacitracin that confer resistance to this antibiotic. Probably responsible for energy coupling to the transport system. This Bacillus licheniformis protein is Bacitracin transport ATP-binding protein BcrA (bcrA).